Consider the following 116-residue polypeptide: uncharacterized protein (116 aa).

Helical transmembrane passes span 5 to 27, 42 to 64, and 88 to 110; these read AILL…AVPC, PFVP…TAGV, and VLHG…VVAI.

It is found in the cell membrane. This is an uncharacterized protein from Archaeoglobus fulgidus (strain ATCC 49558 / DSM 4304 / JCM 9628 / NBRC 100126 / VC-16).